Reading from the N-terminus, the 440-residue chain is Chromosome partition protein MukF (440 aa).

A leucine-zipper region spans residues 208-236 (LSETSGTLRELQDTLEAAGDKLQANLLRI).

The protein belongs to the MukF family. Interacts, and probably forms a ternary complex, with MukE and MukB via its C-terminal region. The complex formation is stimulated by calcium or magnesium. It is required for an interaction between MukE and MukB.

The protein localises to the cytoplasm. It localises to the nucleoid. In terms of biological role, involved in chromosome condensation, segregation and cell cycle progression. May participate in facilitating chromosome segregation by condensation DNA from both sides of a centrally located replisome during cell division. Not required for mini-F plasmid partitioning. Probably acts via its interaction with MukB and MukE. Overexpression results in anucleate cells. It has a calcium binding activity. The chain is Chromosome partition protein MukF from Escherichia coli O157:H7.